The chain runs to 85 residues: MPQIKSAIKRVKTQNATNKRNASELSKLRTAIKKFKNAVETDSKEDVSKLHLEAVRALDKAASKGLIHKNKAARDKSRLTKLANK.

Residues 1–22 are disordered; the sequence is MPQIKSAIKRVKTQNATNKRNA. Residues 13-22 show a composition bias toward polar residues; the sequence is TQNATNKRNA.

It belongs to the bacterial ribosomal protein bS20 family.

Functionally, binds directly to 16S ribosomal RNA. The polypeptide is Small ribosomal subunit protein bS20 (Lactobacillus acidophilus (strain ATCC 700396 / NCK56 / N2 / NCFM)).